We begin with the raw amino-acid sequence, 397 residues long: Phosphopentomutase (397 aa).

Residues Asp-12, Asp-289, His-294, Asp-330, His-331, and His-342 each contribute to the Mn(2+) site.

It belongs to the phosphopentomutase family. The cofactor is Mn(2+).

Its subcellular location is the cytoplasm. It catalyses the reaction 2-deoxy-alpha-D-ribose 1-phosphate = 2-deoxy-D-ribose 5-phosphate. It carries out the reaction alpha-D-ribose 1-phosphate = D-ribose 5-phosphate. Its pathway is carbohydrate degradation; 2-deoxy-D-ribose 1-phosphate degradation; D-glyceraldehyde 3-phosphate and acetaldehyde from 2-deoxy-alpha-D-ribose 1-phosphate: step 1/2. In terms of biological role, isomerase that catalyzes the conversion of deoxy-ribose 1-phosphate (dRib-1-P) and ribose 1-phosphate (Rib-1-P) to deoxy-ribose 5-phosphate (dRib-5-P) and ribose 5-phosphate (Rib-5-P), respectively. This is Phosphopentomutase from Limosilactobacillus reuteri (strain DSM 20016) (Lactobacillus reuteri).